The sequence spans 536 residues: Phosphoenolpyruvate carboxykinase (ATP) (536 aa).

Substrate-binding residues include R61, Y195, and K201. ATP contacts are provided by residues K201, H220, and 236 to 244 (GLSGTGKTT). The Mn(2+) site is built by K201 and H220. D257 is a binding site for Mn(2+). ATP is bound by residues E285, R322, and T447. A substrate-binding site is contributed by R322.

The protein belongs to the phosphoenolpyruvate carboxykinase (ATP) family. Mn(2+) is required as a cofactor.

It localises to the cytoplasm. The enzyme catalyses oxaloacetate + ATP = phosphoenolpyruvate + ADP + CO2. It participates in carbohydrate biosynthesis; gluconeogenesis. Involved in the gluconeogenesis. Catalyzes the conversion of oxaloacetate (OAA) to phosphoenolpyruvate (PEP) through direct phosphoryl transfer between the nucleoside triphosphate and OAA. In Sinorhizobium fredii (strain NBRC 101917 / NGR234), this protein is Phosphoenolpyruvate carboxykinase (ATP).